A 1343-amino-acid polypeptide reads, in one-letter code: Vascular endothelial growth factor receptor 2 (1343 aa).

Residues 1-19 (MESRALLAVALWFCVETRA) form the signal peptide. The Extracellular portion of the chain corresponds to 20–760 (ASVGLPGDSL…EGVQEKTNLE (741 aa)). Residues Asn-46, Asn-96, Asn-143, Asn-158, and Asn-245 are each glycosylated (N-linked (GlcNAc...) asparagine). Ig-like C2-type domains lie at 46–109 (NTTL…RDTD), 141–207 (NKNK…INDE), 224–320 (YDVV…KNKT), 328–414 (PFIA…HMVS), 421–540 (PQIG…RVIS), 547–654 (PEIT…LVKQ), and 663–749 (PMIT…TLFI). A disulfide bridge connects residues Cys-53 and Cys-103. Cys-150 and Cys-200 form a disulfide bridge. A disulfide bridge connects residues Cys-246 and Cys-307. Asn-318, Asn-374, Asn-395, Asn-507, Asn-576, Asn-609, Asn-615, Asn-627, Asn-671, Asn-700, and Asn-717 each carry an N-linked (GlcNAc...) asparagine glycan. 2 disulfides stabilise this stretch: Cys-445–Cys-526 and Cys-567–Cys-638. A disulfide bridge connects residues Cys-684 and Cys-733. A helical membrane pass occupies residues 761–781 (VIILVGTAVIAMFFWLLLVIL). Residues 782 to 1343 (VRTVKRANEG…SGTTLRSSPV (562 aa)) are Cytoplasmic-facing. Phosphotyrosine is present on Tyr-797. In terms of domain architecture, Protein kinase spans 830–1158 (LKLGKPLGRG…FSELVEHLGN (329 aa)). Residues 836–844 (LGRGAFGQV) and Lys-864 each bind ATP. Tyr-947 is subject to Phosphotyrosine; by autocatalysis. Ser-978 and Ser-980 each carry phosphoserine. Tyr-992 carries the phosphotyrosine; by autocatalysis modification. Cys-1020 and Cys-1041 are oxidised to a cystine. Asp-1024 (proton acceptor) is an active-site residue. Phosphotyrosine; by autocatalysis is present on residues Tyr-1050, Tyr-1055, Tyr-1171, and Tyr-1210. Phosphoserine is present on residues Ser-1227 and Ser-1231. Residue Thr-1234 is modified to Phosphothreonine. Residues 1267–1314 (TLEDRNKLSPSFGGMMPSKSRESVASEGSNQTSGYQSGYHSDDTDTTV) are disordered. Over residues 1292–1305 (SEGSNQTSGYQSGY) the composition is skewed to polar residues. Tyr-1301, Tyr-1305, and Tyr-1315 each carry phosphotyrosine; by autocatalysis.

Belongs to the protein kinase superfamily. Tyr protein kinase family. CSF-1/PDGF receptor subfamily. As to quaternary structure, homodimer in the presence of bound dimeric VEGFA, VEGFC or VEGFD ligands; monomeric in the absence of bound ligands. Can also form heterodimers with FLT1/VEGFR1 and KDR/VEGFR2. Interacts (tyrosine phosphorylated) with LFYN, NCK1, PLCG1. Interacts (tyrosine-phosphorylated active form preferentially) with DAB2IP (via C2 domain and active form preferentially); the interaction occurs at the late phase of VEGFA response and inhibits KDR/VEGFR2 activity. Interacts with SHBSH2D2A/TSAD, GRB2, MYOF, CBL and PDCD6. Interacts (via C-terminus domain) with ERN1 (via kinase domain); the interaction is facilitated in a XBP1- and vascular endothelial growth factor (VEGF)-dependent manner in endothelial cells. Interacts (via juxtamembrane region) with chaperone PDCL3 (via thioredoxin fold region); the interaction leads to increased KDR/VEGFR2 abundance through inhibition of its ubiquitination and degradation. Interacts (tyrosine phosphorylated) with CCDC88A/GIV (via SH2-like region); binding requires autophosphorylation of the KDR/VEGFR2 C-terminal region. Interacts with isoform 2 of BSG. Interacts with SLC31A1; this interaction is induced upon VEGFA stimulation leading to SLC31A1 and KDR subsequent co-internalization to early endosomes, thereby activating KDR downstream signaling in endothelial cells. N-glycosylated. In terms of processing, ubiquitinated. Tyrosine phosphorylation of the receptor promotes its poly-ubiquitination, leading to its degradation via the proteasome or lysosomal proteases. Post-translationally, autophosphorylated on tyrosine residues upon ligand binding. Autophosphorylation occurs in trans, i.e. one subunit of the dimeric receptor phosphorylates tyrosine residues on the other subunit. Phosphorylation at Tyr-947 is important for interaction with SH2D2A/TSAD and VEGFA-mediated reorganization of the actin cytoskeleton. Phosphorylation at Tyr-1171 is important for interaction with PLCG1 and SHB. Phosphorylation at Tyr-1210 is important for interaction with NCK1 and FYN. Dephosphorylated by PTPRB. Dephosphorylated by PTPRJ at Tyr-797, Tyr-947, Tyr-992, Tyr-1050, Tyr-1055, Tyr-1171 and Tyr-1210. The inhibitory disulfide bond between Cys-1020 and Cys-1041 may serve as a specific molecular switch for H(2)S-induced modification that regulates KDR/VEGFR2 function. As to expression, expressed in the post-pubertal mammary glands.

The protein resides in the cell membrane. It localises to the cytoplasm. It is found in the nucleus. Its subcellular location is the cytoplasmic vesicle. The protein localises to the early endosome. The protein resides in the cell junction. It localises to the endoplasmic reticulum. It carries out the reaction L-tyrosyl-[protein] + ATP = O-phospho-L-tyrosyl-[protein] + ADP + H(+). With respect to regulation, present in an inactive conformation in the absence of bound ligand. Binding of VEGFA, VEGFC or VEGFD leads to dimerization and activation by autophosphorylation on tyrosine residues. May be regulated by hydrogen sulfide (H(2)S) levels via a sensitive intracellular disulfide bond. Functionally, tyrosine-protein kinase that acts as a cell-surface receptor for VEGFA, VEGFC and VEGFD. Plays an essential role in the regulation of angiogenesis, vascular development, vascular permeability, and embryonic hematopoiesis. Promotes proliferation, survival, migration and differentiation of endothelial cells. Promotes reorganization of the actin cytoskeleton. Isoforms lacking a transmembrane domain may function as decoy receptors for VEGFA, VEGFC and/or VEGFD. Modulates FLT1 and FLT4 signaling by forming heterodimers. Binding of vascular growth factors to isoform 1 leads to the activation of several signaling cascades. Activation of PLCG1 leads to the production of the cellular signaling molecules diacylglycerol and inositol-1,4,5-trisphosphate and the activation of protein kinase C. Mediates activation of MAPK1/ERK2, MAPK3/ERK1 and the MAP kinase signaling pathway, as well as of the AKT1 signaling pathway. Mediates phosphorylation of PIK3R1, the regulatory subunit of phosphatidylinositol 3-kinase, reorganization of the actin cytoskeleton and activation of PTK2/FAK1. Required for VEGFA-mediated induction of NOS2 and NOS3, leading to the production of the signaling molecule nitric oxide (NO) by endothelial cells. Phosphorylates PLCG1. Promotes phosphorylation of FYN, NCK1, NOS3, PIK3R1, PTK2/FAK1 and SRC. The protein is Vascular endothelial growth factor receptor 2 of Rattus norvegicus (Rat).